The primary structure comprises 517 residues: BTB/POZ domain-containing protein At3g49900 (517 aa).

Residues 28–37 (SSSSSSLSLS) are compositionally biased toward low complexity. Positions 28–49 (SSSSSSLSLSPKQPINLSSSPS) are disordered. Residues 38–49 (PKQPINLSSSPS) show a composition bias toward polar residues. The region spanning 67–130 (PDVFVNVGGT…CYGAHIELTP (64 aa)) is the BTB domain. The NPH3 domain maps to 224 to 307 (LPAGDFNVVA…VRAMLQEQLN (84 aa)). Residues 409 to 456 (ARSASFHCVHQPSNVNKTQRGDRGSVSNLSTTYRRRRASPPQAQPQKS) form a disordered region.

Belongs to the NPH3 family.

It functions in the pathway protein modification; protein ubiquitination. Functionally, may act as a substrate-specific adapter of an E3 ubiquitin-protein ligase complex (CUL3-RBX1-BTB) which mediates the ubiquitination and subsequent proteasomal degradation of target proteins. In Arabidopsis thaliana (Mouse-ear cress), this protein is BTB/POZ domain-containing protein At3g49900.